Consider the following 256-residue polypeptide: Imidazole glycerol phosphate synthase subunit HisF (256 aa).

Catalysis depends on residues aspartate 12 and aspartate 131.

Belongs to the HisA/HisF family. Heterodimer of HisH and HisF.

The protein resides in the cytoplasm. It catalyses the reaction 5-[(5-phospho-1-deoxy-D-ribulos-1-ylimino)methylamino]-1-(5-phospho-beta-D-ribosyl)imidazole-4-carboxamide + L-glutamine = D-erythro-1-(imidazol-4-yl)glycerol 3-phosphate + 5-amino-1-(5-phospho-beta-D-ribosyl)imidazole-4-carboxamide + L-glutamate + H(+). The protein operates within amino-acid biosynthesis; L-histidine biosynthesis; L-histidine from 5-phospho-alpha-D-ribose 1-diphosphate: step 5/9. IGPS catalyzes the conversion of PRFAR and glutamine to IGP, AICAR and glutamate. The HisF subunit catalyzes the cyclization activity that produces IGP and AICAR from PRFAR using the ammonia provided by the HisH subunit. This Azotobacter vinelandii (strain DJ / ATCC BAA-1303) protein is Imidazole glycerol phosphate synthase subunit HisF.